The chain runs to 321 residues: MDKKVTLAQLKEVVQEAYDQVKTNTGGKNADYIPYLANVNKDLFGISVCLLNGQTIHVGDTDYRFGIESVSKVHTAILALRQYGAKEILDKIGADATGLPFNSIIAILLENDHPSTPLVNAGAISACSMVQPIGDSAKKWDAIVENVTDLCGSAPQLIDELYKSESDTNFNNRSIAWLLKNYNRIYDDPDMALDLYTRQCSLGVTALQLSVAAGTIANGGVNPVTKKEVFDASLAPKITAMIAAVGFYEHTGDWMYTSGIPAKTGVGGGVMGVLPGQFGIAAFAPPLDGAGNSVKAQLAIQYVMNKLGLNVFSDNHLIVVD.

Substrate-binding residues include Ser69, Asn120, Glu165, Asn172, Tyr196, Tyr248, and Val266.

It belongs to the glutaminase family. In terms of assembly, homotetramer.

It carries out the reaction L-glutamine + H2O = L-glutamate + NH4(+). This is Glutaminase from Bacteroides thetaiotaomicron (strain ATCC 29148 / DSM 2079 / JCM 5827 / CCUG 10774 / NCTC 10582 / VPI-5482 / E50).